Reading from the N-terminus, the 515-residue chain is Probable NADPH:adrenodoxin oxidoreductase, mitochondrial (515 aa).

Ala-52, Glu-73, Leu-81, and Ile-119 together coordinate FAD. Residues 191 to 194 (QGNV), 236 to 237 (RR), and Glu-248 contribute to the NADP(+) site. Residues Trp-419 and 426–428 (GSI) contribute to the FAD site. An NADP(+)-binding site is contributed by Gly-426.

The protein belongs to the ferredoxin--NADP reductase type 1 family. FAD serves as cofactor.

It is found in the mitochondrion inner membrane. It catalyses the reaction 2 reduced [adrenodoxin] + NADP(+) + H(+) = 2 oxidized [adrenodoxin] + NADPH. The sequence is that of Probable NADPH:adrenodoxin oxidoreductase, mitochondrial (fdxr) from Dictyostelium discoideum (Social amoeba).